Here is a 212-residue protein sequence, read N- to C-terminus: External core antigen (212 aa).

Residues 1-19 (MQLFHLCLIISCSCPTVQA) form the signal peptide. Residues 25 to 27 (GWL) are HBEAG. The interval 179-212 (RQRGRTIRRRTPSPRRRRSQSPRRRRSQSRESQC) is disordered. Residues 180–205 (QRGRTIRRRTPSPRRRRSQSPRRRRS) show a composition bias toward basic residues. The 1; half-length repeat unit spans residues 184-190 (TIRRRTP). The segment at 184 to 206 (TIRRRTPSPRRRRSQSPRRRRSQ) is 3 X 8 AA repeats of S-P-R-R-R-R-S-Q. A propeptide spanning residues 184-212 (TIRRRTPSPRRRRSQSPRRRRSQSRESQC) is cleaved from the precursor. 2 tandem repeats follow at residues 191-198 (SPRRRRSQ) and 199-206 (SPRRRRSQ).

This sequence belongs to the orthohepadnavirus precore antigen family. In terms of assembly, homodimerizes. Post-translationally, phosphorylated. In terms of processing, cleaved by host furin.

It is found in the secreted. The protein localises to the host nucleus. Its function is as follows. May regulate immune response to the intracellular capsid in acting as a T-cell tolerogen, by having an immunoregulatory effect which prevents destruction of infected cells by cytotoxic T-cells. This immune regulation may predispose to chronicity during perinatal infections and prevent severe liver injury during adult infections. This is External core antigen from Hepatitis B virus genotype D subtype ayw (isolate Australia/AustKW/1991) (HBV-D).